The chain runs to 351 residues: Histidinol-phosphate aminotransferase (351 aa).

The residue at position 221 (lysine 221) is an N6-(pyridoxal phosphate)lysine.

It belongs to the class-II pyridoxal-phosphate-dependent aminotransferase family. Histidinol-phosphate aminotransferase subfamily. Homodimer. It depends on pyridoxal 5'-phosphate as a cofactor.

It carries out the reaction L-histidinol phosphate + 2-oxoglutarate = 3-(imidazol-4-yl)-2-oxopropyl phosphate + L-glutamate. The protein operates within amino-acid biosynthesis; L-histidine biosynthesis; L-histidine from 5-phospho-alpha-D-ribose 1-diphosphate: step 7/9. In Staphylococcus haemolyticus (strain JCSC1435), this protein is Histidinol-phosphate aminotransferase.